The primary structure comprises 119 residues: Large ribosomal subunit protein uL24 (119 aa).

The protein belongs to the universal ribosomal protein uL24 family. Part of the 50S ribosomal subunit.

One of two assembly initiator proteins, it binds directly to the 5'-end of the 23S rRNA, where it nucleates assembly of the 50S subunit. Functionally, one of the proteins that surrounds the polypeptide exit tunnel on the outside of the subunit. This chain is Large ribosomal subunit protein uL24, found in Clavibacter sepedonicus (Clavibacter michiganensis subsp. sepedonicus).